A 354-amino-acid polypeptide reads, in one-letter code: Ion-translocating oxidoreductase complex subunit D (354 aa).

Transmembrane regions (helical) follow at residues 19-39 (IMLWVILAMLPAIFAQLYYFG), 40-60 (FGVLFQITIAVVFALCLEFLV), 70-89 (FYISDFSVTLTALILAVAIP), 94-116 (YWIILIGIFCAVILGKHVYGGLG), and 123-143 (AMVGYVVLLVSFPMQMTTWLA). Position 186 is an FMN phosphoryl threonine (Thr-186). 5 helical membrane-spanning segments follow: residues 215–235 (LAGLGWFQVNLAFLLGGLFLV), 242–262 (WQIPTALLITVCLFSLCSWLF), 266–286 (MPSPLWQLFSGATMFCAFFIA), 300–320 (LVFGVLVGLLLCLIRFYGGYP), and 321–341 (DGAAFAILLANICVPLIDQYT).

The protein belongs to the NqrB/RnfD family. In terms of assembly, the complex is composed of six subunits: RnfA, RnfB, RnfC, RnfD, RnfE and RnfG. It depends on FMN as a cofactor.

Its subcellular location is the cell inner membrane. Functionally, part of a membrane-bound complex that couples electron transfer with translocation of ions across the membrane. This Mannheimia succiniciproducens (strain KCTC 0769BP / MBEL55E) protein is Ion-translocating oxidoreductase complex subunit D.